A 242-amino-acid polypeptide reads, in one-letter code: MNTEKPSVAHNVDHNEIAKFEAVASRWWDLEGEFKPLHRINPLRLGYITERSGGLFGKKVLDVGCGGGILAESMAREGATVTGLDMGFEPLQVAKLHALESGIEVEYVQETVEEHAAKHAQQYDVVTCMEMLEHVPDPQSVVHACAQLVKPGGEVFFSTLNRNGKSWLMAVVGAEYILRMVPKGTHDVKKFIKPAELLSWVDETVLKEQHITGLHYNPITNTFKLGPGVDVNYMLHTRAKKA.

S-adenosyl-L-methionine is bound by residues arginine 44, glycine 64, aspartate 85, and methionine 129.

This sequence belongs to the methyltransferase superfamily. UbiG/COQ3 family.

The enzyme catalyses a 3-demethylubiquinol + S-adenosyl-L-methionine = a ubiquinol + S-adenosyl-L-homocysteine + H(+). It catalyses the reaction a 3-(all-trans-polyprenyl)benzene-1,2-diol + S-adenosyl-L-methionine = a 2-methoxy-6-(all-trans-polyprenyl)phenol + S-adenosyl-L-homocysteine + H(+). The protein operates within cofactor biosynthesis; ubiquinone biosynthesis. In terms of biological role, O-methyltransferase that catalyzes the 2 O-methylation steps in the ubiquinone biosynthetic pathway. The polypeptide is Ubiquinone biosynthesis O-methyltransferase (Salmonella agona (strain SL483)).